An 805-amino-acid chain; its full sequence is Na(+)/H(+) antiporter subunit A1 (805 aa).

The next 20 membrane-spanning stretches (helical) occupy residues 1-21 (MSLLHIAVLLPLIFALIIPFV), 30-50 (LGWFVLPIPVVLFIYFLSYIS), 79-99 (LGLLFSLLITGIGCLIVLYSI), 117-137 (LFMGAMLGLVLSDNLIILYLF), 166-186 (MLVTVFGGLSLLGGIILLSIA), 201-221 (EIQTSPFFIFSMILVLIGAMT), 226-246 (FPFYVWLPDAMEAPTPVSAYL), 265-285 (IFAVSQGWIWTVTAVGLITLF), 300-320 (ILAFSTVSQLGMIMAMLGVGA), 337-357 (FTAAIFHLINHATFKGALFMI), 377-397 (LTIMPISFTITLITSLSMAGI), 427-447 (LGILIPITAIIGSVFTFVYSI), 480-500 (ILAILVIVFGLFPAILSGSII), 531-551 (LGIYIVGIVLIITFSYWIYLL), 591-611 (LVIIFASLIVIALVTLLVTPF), 623-643 (PFELIIVVLIITAASMIIFAK), 646-666 (LFSIIMASAVGYSVAIFFIFF), 671-691 (LALTQFVVESISTALFLLCFY), 707-727 (LVNIVISVGAGIVVTVLGLIA), and 766-786 (TLFESSVLGIAGLGVYTMIKL).

The protein belongs to the CPA3 antiporters (TC 2.A.63) subunit A family. As to quaternary structure, may form a heterooligomeric complex that consists of seven subunits: mnhA1, mnhB1, mnhC1, mnhD1, mnhE1, mnhF1 and mnhG1.

The protein resides in the cell membrane. Its function is as follows. Mnh complex is a Na(+)/H(+) antiporter involved in Na(+) excretion. This chain is Na(+)/H(+) antiporter subunit A1 (mnhA1), found in Staphylococcus saprophyticus subsp. saprophyticus (strain ATCC 15305 / DSM 20229 / NCIMB 8711 / NCTC 7292 / S-41).